A 271-amino-acid chain; its full sequence is Autophagy-related protein 5 (271 aa).

Lys145 is covalently cross-linked (Glycyl lysine isopeptide (Lys-Gly) (interchain with G-Cter in ATG12)).

The protein belongs to the ATG5 family. Conjugated with ATG12. Interacts with ATG10. The ATG5-ATG12 conjugate forms a complex with several units of ATG16. The ATG12-ATG5 conjugate also associates with ATG3. In terms of processing, conjugated to ATG12; which is essential for autophagy. Conjugation with ATG12 involves ATG7 as an E1-like activating enzyme and ATG10 as an E2-like conjugating enzyme.

Its subcellular location is the preautophagosomal structure membrane. Involved in cytoplasm to vacuole transport (Cvt) and autophagic vesicle formation. Autophagy is essential for maintenance of amino acid levels and protein synthesis under nitrogen starvation. Required for selective autophagic degradation of the nucleus (nucleophagy). Also required for mitophagy, which eliminates defective or superfluous mitochondria in order to fulfill cellular energy requirements and prevent excess ROS production. Conjugation with ATG12, through a ubiquitin-like conjugating system involving ATG7 as an E1-like activating enzyme and ATG10 as an E2-like conjugating enzyme, is essential for its function. The ATG12-ATG5 conjugate acts as an E3-like enzyme which is required for lipidation of ATG8 and ATG8 association to the vesicle membranes. ATG12-ATG5 rearranges the ATG3 catalytic center and enhances its E2 activity. In Kluyveromyces marxianus (strain DMKU3-1042 / BCC 29191 / NBRC 104275) (Yeast), this protein is Autophagy-related protein 5.